A 59-amino-acid chain; its full sequence is Large ribosomal subunit protein uL30 (59 aa).

It belongs to the universal ribosomal protein uL30 family. Part of the 50S ribosomal subunit.

This chain is Large ribosomal subunit protein uL30, found in Solibacter usitatus (strain Ellin6076).